The following is a 237-amino-acid chain: Large ribosomal subunit protein uL1 (237 aa).

The protein belongs to the universal ribosomal protein uL1 family. As to quaternary structure, part of the 50S ribosomal subunit.

Functionally, binds directly to 23S rRNA. The L1 stalk is quite mobile in the ribosome, and is involved in E site tRNA release. Its function is as follows. Protein L1 is also a translational repressor protein, it controls the translation of the L11 operon by binding to its mRNA. This chain is Large ribosomal subunit protein uL1, found in Chloroflexus aurantiacus (strain ATCC 29364 / DSM 637 / Y-400-fl).